Consider the following 79-residue polypeptide: Reactive oxygen species modulator 1 (79 aa).

The helical transmembrane segment at 22 to 44 (GFVMGCAVGMAAGALFGTFSCLR) threads the bilayer. Residues 42–60 (CLRIGMRGRELMGGIGKTM) form a sufficient for antibacterial activity region.

It belongs to the MGR2 family.

Its subcellular location is the mitochondrion inner membrane. Its function is as follows. Has antibacterial activity against a variety of bacteria including S.aureus, P.aeruginosa and M.tuberculosis. Acts by inducing bacterial membrane breakage. Induces production of reactive oxygen species (ROS) which are necessary for cell proliferation. May play a role in inducing oxidative DNA damage and replicative senescence. May play a role in the coordination of mitochondrial morphology and cell proliferation. This Bos taurus (Bovine) protein is Reactive oxygen species modulator 1 (ROMO1).